Here is a 543-residue protein sequence, read N- to C-terminus: CTP synthase (543 aa).

Positions 1–265 (MARYIFITGG…DEEVLAAFGI (265 aa)) are amidoligase domain. Residue serine 13 participates in CTP binding. Serine 13 lines the UTP pocket. 14 to 19 (SLGKGL) is a binding site for ATP. Tyrosine 54 is an L-glutamine binding site. Aspartate 71 lines the ATP pocket. Residues aspartate 71 and glutamate 139 each coordinate Mg(2+). Residues 146-148 (DIE), 186-191 (KTKPTQ), and lysine 222 contribute to the CTP site. Residues 186 to 191 (KTKPTQ) and lysine 222 each bind UTP. 238–240 (RDA) serves as a coordination point for ATP. The Glutamine amidotransferase type-1 domain maps to 291–542 (TIAIVGKYTG…IEAAMAQSRL (252 aa)). Residue glycine 353 coordinates L-glutamine. Residue cysteine 380 is the Nucleophile; for glutamine hydrolysis of the active site. L-glutamine is bound by residues 381-384 (FGMQ), glutamate 404, and arginine 470. Catalysis depends on residues histidine 515 and glutamate 517.

The protein belongs to the CTP synthase family. Homotetramer.

The enzyme catalyses UTP + L-glutamine + ATP + H2O = CTP + L-glutamate + ADP + phosphate + 2 H(+). The catalysed reaction is L-glutamine + H2O = L-glutamate + NH4(+). It catalyses the reaction UTP + NH4(+) + ATP = CTP + ADP + phosphate + 2 H(+). The protein operates within pyrimidine metabolism; CTP biosynthesis via de novo pathway; CTP from UDP: step 2/2. With respect to regulation, allosterically activated by GTP, when glutamine is the substrate; GTP has no effect on the reaction when ammonia is the substrate. The allosteric effector GTP functions by stabilizing the protein conformation that binds the tetrahedral intermediate(s) formed during glutamine hydrolysis. Inhibited by the product CTP, via allosteric rather than competitive inhibition. Catalyzes the ATP-dependent amination of UTP to CTP with either L-glutamine or ammonia as the source of nitrogen. Regulates intracellular CTP levels through interactions with the four ribonucleotide triphosphates. This is CTP synthase from Rhodopseudomonas palustris (strain BisA53).